We begin with the raw amino-acid sequence, 319 residues long: Nucleotide-binding protein Mvan_2698 (319 aa).

Positions 1 to 12 are enriched in basic and acidic residues; the sequence is MTEQGMHQELRE. Residues 1 to 26 form a disordered region; it reads MTEQGMHQELREGAGTAGDEGGLEAA. 43–50 provides a ligand contact to ATP; it reads GLSGAGRG. GTP is bound at residue 94–97; that stretch reads DVRS.

Belongs to the RapZ-like family.

Displays ATPase and GTPase activities. The polypeptide is Nucleotide-binding protein Mvan_2698 (Mycolicibacterium vanbaalenii (strain DSM 7251 / JCM 13017 / BCRC 16820 / KCTC 9966 / NRRL B-24157 / PYR-1) (Mycobacterium vanbaalenii)).